The primary structure comprises 316 residues: Small ribosomal subunit protein mS26 (316 aa).

Residues 41–71 are disordered; that stretch reads TTRSARDSVSIPPDSPNYIKVPEPPQSSEVR.

The protein belongs to the mitochondrion-specific ribosomal protein mS26 family. As to quaternary structure, component of the mitochondrial small ribosomal subunit (mt-SSU). Mature N.crassa 74S mitochondrial ribosomes consist of a small (37S) and a large (54S) subunit. The 37S small subunit contains a 16S ribosomal RNA (16S mt-rRNA) and 32 different proteins. The 54S large subunit contains a 23S rRNA (23S mt-rRNA) and 42 different proteins.

It is found in the mitochondrion. Functionally, component of the mitochondrial ribosome (mitoribosome), a dedicated translation machinery responsible for the synthesis of mitochondrial genome-encoded proteins, including at least some of the essential transmembrane subunits of the mitochondrial respiratory chain. The mitoribosomes are attached to the mitochondrial inner membrane and translation products are cotranslationally integrated into the membrane. The sequence is that of Small ribosomal subunit protein mS26 (pet123) from Neurospora crassa (strain ATCC 24698 / 74-OR23-1A / CBS 708.71 / DSM 1257 / FGSC 987).